Here is a 242-residue protein sequence, read N- to C-terminus: MSQADLLAQDPVFQLKGSMLAITVMELAHNDLDRLDAQLTEKVAQAPAFFSNTPLVLALDKLPEGEGELNLAELMAVCRRHGLRTLAIRASREGDIAAAEAMDLPVLPPSGARERLLDPAPKKVEEKPAEPEHKPSRIVTSPVRGGQQVYAQGGDLIVLAPVSAGAELLADGNIHVYAPMRGRALAGIKGNTKARIFCQQMGAEMLSIAGHYKVAEDLRRDPLWGDAVHVSLSGDVLNITRL.

Residues 120-135 are compositionally biased toward basic and acidic residues; the sequence is APKKVEEKPAEPEHKP. A disordered region spans residues 120-144; sequence APKKVEEKPAEPEHKPSRIVTSPVR.

This sequence belongs to the MinC family. As to quaternary structure, interacts with MinD and FtsZ.

Its function is as follows. Cell division inhibitor that blocks the formation of polar Z ring septums. Rapidly oscillates between the poles of the cell to destabilize FtsZ filaments that have formed before they mature into polar Z rings. Prevents FtsZ polymerization. The chain is Probable septum site-determining protein MinC from Ectopseudomonas mendocina (strain ymp) (Pseudomonas mendocina).